Here is an 82-residue protein sequence, read N- to C-terminus: Small ribosomal subunit protein uS17 (82 aa).

Belongs to the universal ribosomal protein uS17 family. As to quaternary structure, part of the 30S ribosomal subunit.

In terms of biological role, one of the primary rRNA binding proteins, it binds specifically to the 5'-end of 16S ribosomal RNA. This Aeromonas hydrophila subsp. hydrophila (strain ATCC 7966 / DSM 30187 / BCRC 13018 / CCUG 14551 / JCM 1027 / KCTC 2358 / NCIMB 9240 / NCTC 8049) protein is Small ribosomal subunit protein uS17.